The chain runs to 319 residues: Ribonuclease Z (319 aa).

Residues histidine 62, histidine 64, aspartate 66, histidine 67, histidine 139, aspartate 209, and histidine 268 each contribute to the Zn(2+) site. The active-site Proton acceptor is aspartate 66.

Belongs to the RNase Z family. In terms of assembly, homodimer. It depends on Zn(2+) as a cofactor.

It carries out the reaction Endonucleolytic cleavage of RNA, removing extra 3' nucleotides from tRNA precursor, generating 3' termini of tRNAs. A 3'-hydroxy group is left at the tRNA terminus and a 5'-phosphoryl group is left at the trailer molecule.. Its function is as follows. Zinc phosphodiesterase, which displays some tRNA 3'-processing endonuclease activity. Probably involved in tRNA maturation, by removing a 3'-trailer from precursor tRNA. In Pseudomonas putida (strain GB-1), this protein is Ribonuclease Z.